Reading from the N-terminus, the 147-residue chain is Ras-related protein RabK2 (147 aa).

Residues 11 to 15 (NTHGS) and 63 to 66 (TKSD) each bind GTP. The S-geranylgeranyl cysteine moiety is linked to residue Cys-145.

Belongs to the small GTPase superfamily. Rab family.

It localises to the cell membrane. In Dictyostelium discoideum (Social amoeba), this protein is Ras-related protein RabK2 (rabK2).